A 119-amino-acid polypeptide reads, in one-letter code: Ribonuclease P protein component (119 aa).

The protein belongs to the RnpA family. Consists of a catalytic RNA component (M1 or rnpB) and a protein subunit.

It catalyses the reaction Endonucleolytic cleavage of RNA, removing 5'-extranucleotides from tRNA precursor.. Its function is as follows. RNaseP catalyzes the removal of the 5'-leader sequence from pre-tRNA to produce the mature 5'-terminus. It can also cleave other RNA substrates such as 4.5S RNA. The protein component plays an auxiliary but essential role in vivo by binding to the 5'-leader sequence and broadening the substrate specificity of the ribozyme. The polypeptide is Ribonuclease P protein component (Escherichia fergusonii (strain ATCC 35469 / DSM 13698 / CCUG 18766 / IAM 14443 / JCM 21226 / LMG 7866 / NBRC 102419 / NCTC 12128 / CDC 0568-73)).